The primary structure comprises 107 residues: Universal stress protein B homolog (107 aa).

2 helical membrane-spanning segments follow: residues 6–26 (IILF…LTAL) and 86–106 (VREL…AAFL).

The protein belongs to the universal stress protein B family.

The protein localises to the cell inner membrane. The chain is Universal stress protein B homolog from Vibrio vulnificus (strain CMCP6).